The chain runs to 655 residues: Acetyl-coenzyme A synthetase (655 aa).

CoA-binding positions include 196 to 199 (RGGK) and T316. ATP is bound by residues 392–394 (GEP), 416–421 (DTWWQT), D507, and R522. S530 is a binding site for CoA. An ATP-binding site is contributed by R533. Residues V544 and V549 each coordinate Mg(2+). Residue K619 is modified to N6-acetyllysine.

Belongs to the ATP-dependent AMP-binding enzyme family. Mg(2+) serves as cofactor. Post-translationally, acetylated. Deacetylation by the SIR2-homolog deacetylase activates the enzyme.

The enzyme catalyses acetate + ATP + CoA = acetyl-CoA + AMP + diphosphate. Catalyzes the conversion of acetate into acetyl-CoA (AcCoA), an essential intermediate at the junction of anabolic and catabolic pathways. AcsA undergoes a two-step reaction. In the first half reaction, AcsA combines acetate with ATP to form acetyl-adenylate (AcAMP) intermediate. In the second half reaction, it can then transfer the acetyl group from AcAMP to the sulfhydryl group of CoA, forming the product AcCoA. The protein is Acetyl-coenzyme A synthetase of Thiobacillus denitrificans (strain ATCC 25259 / T1).